The following is a 339-amino-acid chain: MTISAPPIIDIRQAGLESSIPDQVVEGLTKEVKTLPALLFYSTKGIQHWNRHSHAADFYPRHEELCILKAEASKMAASIAQDSLVIDMGSASMDKVILLLEALEEQKKSITYYALDLSYSELASNFQAIPVDRFHYVRFAALHGTFDDGLHWLQNAPDIRNRPRCILLFGLTIGNFSRDNAASFLRNIAQSALSTSPTQSSIIVSLDSCKLPTKILRAYTADGVVPFALASLSYANSLFHPKGDRKIFNEEDWYFHSEWNHALGRHEASLITQSKDIQLGAPLETVIVRRDEKIRFGCSYKYDKAERDQLFHSAGLEDAAVWTAPDCDVAFYQLRLRLN.

Belongs to the methyltransferase superfamily. In terms of assembly, homodimer.

It catalyses the reaction 4-(3-methylbut-2-enyl)-L-tryptophan + S-adenosyl-L-methionine = 4-(3-methylbut-2-enyl)-L-abrine + S-adenosyl-L-homocysteine + H(+). Its pathway is alkaloid biosynthesis; ergot alkaloid biosynthesis. 4-dimethylallyltryptophan N-methyltransferase; part of the gene cluster that mediates the biosynthesis of fumiclavanine C, a fungal ergot alkaloid. DmaW catalyzes the first step of ergot alkaloid biosynthesis by condensing dimethylallyl diphosphate (DMAP) and tryptophan to form 4-dimethylallyl-L-tryptophan. The second step is catalyzed by the methyltransferase easF that methylates 4-dimethylallyl-L-tryptophan in the presence of S-adenosyl-L-methionine, resulting in the formation of 4-dimethylallyl-L-abrine. The catalase easC and the FAD-dependent oxidoreductase easE then transform 4-dimethylallyl-L-abrine to chanoclavine-I which is further oxidized by EasD in the presence of NAD(+), resulting in the formation of chanoclavine-I aldehyde. EasA reduces chanoclavine-I aldehyde to dihydrochanoclavine-I aldehyde that spontaneously dehydrates to form 6,8-dimethyl-6,7-didehydroergoline. EasG then catalyzes the reduction of 6,8-dimethyl-6,7-didehydroergoline to form festuclavine. Hydrolysis of festuclavine by easM then leads to the formation of fumigaclavine B which is in turn acetylated by easN to fumigaclavine A. Finally, easL catalyzes the conversion of fumigaclavine A into fumigaclavine C by attaching a dimethylallyl moiety to C-2 of the indole nucleus. In Aspergillus fumigatus (strain ATCC MYA-4609 / CBS 101355 / FGSC A1100 / Af293) (Neosartorya fumigata), this protein is 4-dimethylallyltryptophan N-methyltransferase easF.